A 785-amino-acid polypeptide reads, in one-letter code: Endonuclease MutS2 (785 aa).

332 to 339 (GPNTGGKT) provides a ligand contact to ATP. The Smr domain maps to 710–785 (IDLRGLDAEE…GDGATIVELK (76 aa)).

Belongs to the DNA mismatch repair MutS family. MutS2 subfamily. As to quaternary structure, homodimer. Binds to stalled ribosomes, contacting rRNA.

Endonuclease that is involved in the suppression of homologous recombination and thus may have a key role in the control of bacterial genetic diversity. In terms of biological role, acts as a ribosome collision sensor, splitting the ribosome into its 2 subunits. Detects stalled/collided 70S ribosomes which it binds and splits by an ATP-hydrolysis driven conformational change. Acts upstream of the ribosome quality control system (RQC), a ribosome-associated complex that mediates the extraction of incompletely synthesized nascent chains from stalled ribosomes and their subsequent degradation. Probably generates substrates for RQC. This Clostridium botulinum (strain Eklund 17B / Type B) protein is Endonuclease MutS2.